The primary structure comprises 506 residues: Maturase K (506 aa).

Belongs to the intron maturase 2 family. MatK subfamily.

Its subcellular location is the plastid. The protein resides in the chloroplast. Functionally, usually encoded in the trnK tRNA gene intron. Probably assists in splicing its own and other chloroplast group II introns. This Trifolium incarnatum (Crimson clover) protein is Maturase K.